The following is a 395-amino-acid chain: Bifunctional fatty acid conjugase/Delta(12)-oleate desaturase (395 aa).

2 helical membrane passes run 73–93 (FALAFLFYHSAVTYIPLLPKP) and 97–117 (MAWPVYWFLQGSNMLGIWVIA). The Histidine box-1 motif lies at 118–122 (HECGH). A helical transmembrane segment spans residues 130–150 (WVNDAVGFFLHTSLLVPYFPF). Positions 154–158 (HRRHH) match the Histidine box-2 motif. 3 consecutive transmembrane segments (helical) span residues 192–212 (VLTLTLTLLVGWPSYLAFNAS), 236–256 (FWVHVSNIGILAIYYILYRLA), and 264–284 (LLSIYGVPVLILNAFVVLITF). A Histidine box-3 motif is present at residues 328–332 (HVIHH).

Belongs to the fatty acid desaturase type 1 family.

It is found in the membrane. The catalysed reaction is a (9Z,12Z)-octadecadienoyl-containing glycerolipid + 2 Fe(II)-[cytochrome b5] + O2 + 2 H(+) = a (9Z,11E,13Z)-octadeca-9,11,13-trienoyl-containing glycerolipid + 2 Fe(III)-[cytochrome b5] + 2 H2O. Its pathway is lipid metabolism; polyunsaturated fatty acid biosynthesis. Functionally, converts a single cis double bond at position 12 of linoleate incorporated into phosphatidylcholine into conjugated 11-trans and 13-cis double bonds. Produces punicic acid (18:3(9Z,11E,13Z)) from linoleic acid and conjugated octadecatetraenoic fatty acid from gamma-linolenic acid. No activity with cis- and trans-vaccenic acid, alpha-linolenic acid or homo-gamma-linolenic acid. 16:2(9Z,12Z), 18:3(9Z,12Z,15Z) and 18:2(9Z,12Z) are substrates for the conjugase to form trans-Delta(11) and cis-Delta(13) double bonds. No activity on the cis-Delta(9) double bonds of oleic and palmitoleic acids. This chain is Bifunctional fatty acid conjugase/Delta(12)-oleate desaturase, found in Punica granatum (Pomegranate).